The chain runs to 2136 residues: Protein Ycf2 (2136 aa).

1404 to 1411 (GPIETGRS) contributes to the ATP binding site.

It belongs to the Ycf2 family.

It is found in the plastid. Its subcellular location is the chloroplast stroma. Probable ATPase of unknown function. Its presence in a non-photosynthetic plant (Epifagus virginiana) and experiments in tobacco indicate that it has an essential function which is probably not related to photosynthesis. The chain is Protein Ycf2 from Marchantia polymorpha (Common liverwort).